The following is a 1088-amino-acid chain: RNA-directed RNA polymerase (1088 aa).

Residues 501 to 687 (LSYGDVTRFL…AKRYIAGGKI (187 aa)) enclose the RdRp catalytic domain.

It belongs to the reoviridae RNA-directed RNA polymerase family. In terms of assembly, interacts with VP3 (Potential). Interacts with VP2; this interaction activates VP1. Interacts with NSP5; this interaction is probably necessary for the formation of functional virus factories. Interacts with NSP2; this interaction is weak. Mg(2+) serves as cofactor.

It is found in the virion. The catalysed reaction is RNA(n) + a ribonucleoside 5'-triphosphate = RNA(n+1) + diphosphate. Functionally, RNA-directed RNA polymerase that is involved in both transcription and genome replication. Together with VP3 capping enzyme, forms an enzyme complex positioned near the channels situated at each of the five-fold vertices of the core. Following infection, the outermost layer of the virus is lost, leaving a double-layered particle (DLP) made up of the core and VP6 shell. VP1 then catalyzes the transcription of fully conservative plus-strand genomic RNAs that are extruded through the DLP's channels into the cytoplasm where they function as mRNAs for translation of viral proteins. One copy of each of the viral (+)RNAs is also recruited during core assembly, together with newly synthesized polymerase complexes and VP2. The polymerase of these novo-formed particles catalyzes the synthesis of complementary minus-strands leading to dsRNA formation. To do so, the polymerase specifically recognizes and binds 4 bases 5'-UGUG-3' in the conserved 3'-sequence of plus-strand RNA templates. VP2 presumably activates the autoinhibited VP1-RNA complex to coordinate packaging and genome replication. Once dsRNA synthesis is complete, the polymerase switches to the transcriptional mode, thus providing secondary transcription. The chain is RNA-directed RNA polymerase from Macaca mulatta (Rhesus macaque).